A 167-amino-acid polypeptide reads, in one-letter code: UPF0114 protein in repA1-repA2 intergenic region (167 aa).

A run of 3 helical transmembrane segments spans residues 15 to 35 (LMFPVYVGLSFGFILLTLKFF), 53 to 73 (LVLVVLSLIDIALVGGLLVMV), and 136 to 156 (IMLCVIIHLTFVLSAFGMAYI).

It belongs to the UPF0114 family.

It localises to the cell membrane. The chain is UPF0114 protein in repA1-repA2 intergenic region from Buchnera aphidicola subsp. Diuraphis noxia.